A 447-amino-acid chain; its full sequence is UMP-CMP kinase 2, mitochondrial (447 aa).

The transit peptide at Met-1–Tyr-73 directs the protein to the mitochondrion. Gly-259–Thr-266 provides a ligand contact to ATP. Residues Glu-380–Met-412 are a coiled coil.

This sequence belongs to the thymidylate kinase family. As to expression, strongly expressed in the brain.

It is found in the mitochondrion. It carries out the reaction CMP + ATP = CDP + ADP. It catalyses the reaction dCMP + ATP = dCDP + ADP. The catalysed reaction is a 2'-deoxyribonucleoside 5'-diphosphate + ATP = a 2'-deoxyribonucleoside 5'-triphosphate + ADP. The enzyme catalyses a ribonucleoside 5'-diphosphate + ATP = a ribonucleoside 5'-triphosphate + ADP. Functionally, mitochondrial nucleotide monophosphate kinase needed for salvage dNTP synthesis that mediates immunomodulatory and antiviral activities through IFN-dependent and IFN-independent pathways. Restricts the replication of multiple viruses including flaviviruses or coronaviruses. Together with viperin/RSAD2 and ddhCTP, suppresses the replication of several coronaviruses through inhibition of the viral RNA-dependent RNA polymerase activities. Concerning flaviviruses, restricts RNA translation when localized to the mitochondria independently of its kinase activity. Is able to phosphorylate dUMP, dCMP, CMP, UMP and monophosphates of the pyrimidine nucleoside analogs ddC, dFdC, araC, BVDU and FdUrd with ATP as phosphate donor. Efficacy is highest for dUMP followed by dCMP while CMP and UMP are poor substrates. Controls therefore mitochondrial DNA synthesis by supplying required deoxyribonucleotides. CMPK2-dependent mitochondrial DNA synthesis is necessary for the production of oxidized mitochondrial DNA fragments after exposure to NLRP3 activators. In turn, cytosolic oxidized mtDNA associates with the NLRP3 inflammasome complex and is required for its activation. This is UMP-CMP kinase 2, mitochondrial (Cmpk2) from Mus musculus (Mouse).